We begin with the raw amino-acid sequence, 141 residues long: Nucleoside diphosphate kinase (141 aa).

ATP is bound by residues K9, F57, R85, T91, R102, and N112. Catalysis depends on H115, which acts as the Pros-phosphohistidine intermediate.

The protein belongs to the NDK family. As to quaternary structure, homotetramer. The cofactor is Mg(2+).

It localises to the cytoplasm. It carries out the reaction a 2'-deoxyribonucleoside 5'-diphosphate + ATP = a 2'-deoxyribonucleoside 5'-triphosphate + ADP. The catalysed reaction is a ribonucleoside 5'-diphosphate + ATP = a ribonucleoside 5'-triphosphate + ADP. Its function is as follows. Major role in the synthesis of nucleoside triphosphates other than ATP. The ATP gamma phosphate is transferred to the NDP beta phosphate via a ping-pong mechanism, using a phosphorylated active-site intermediate. This is Nucleoside diphosphate kinase from Chlamydia abortus (strain DSM 27085 / S26/3) (Chlamydophila abortus).